Reading from the N-terminus, the 376-residue chain is Copper-containing nitrite reductase (376 aa).

The tat-type signal signal peptide spans 1 to 33; it reads MAEQMQISRRTILAGAALAGALAPVLATTSAWG. Gln-34 is modified (pyrrolidone carboxylic acid). Plastocyanin-like domains are found at residues 34–211 and 212–376; these read QGAV…YDKI and YYVG…PSGT. Cu cation-binding residues include His-131, His-136, His-171, Cys-172, His-181, Met-186, and His-342.

This sequence belongs to the multicopper oxidase family. In terms of assembly, homotrimer. Cu(2+) is required as a cofactor. Requires Cu(+) as cofactor. It depends on FAD as a cofactor. Post-translationally, predicted to be exported by the Tat system. The position of the signal peptide cleavage has been experimentally proven.

It localises to the periplasm. It catalyses the reaction nitric oxide + Fe(III)-[cytochrome c] + H2O = Fe(II)-[cytochrome c] + nitrite + 2 H(+). Its pathway is nitrogen metabolism; nitrate reduction (denitrification); dinitrogen from nitrate: step 2/4. The sequence is that of Copper-containing nitrite reductase (nirK) from Alcaligenes faecalis.